The primary structure comprises 193 residues: Transmembrane protein 276 (193 aa).

A signal peptide spans 1-32; sequence MTPRPGGEWSSALSHLALGAVSLHAALSTAQA. The next 4 helical transmembrane spans lie at 35 to 55, 63 to 83, 89 to 109, and 114 to 134; these read GAAA…ASGL, AGAW…FHWV, SANL…HLGA, and VAGQ…AVFT.

It localises to the membrane. The polypeptide is Transmembrane protein 276 (Bos taurus (Bovine)).